A 408-amino-acid chain; its full sequence is CST complex subunit STN1 (408 aa).

Residues 8–195 (MQCESSPKEE…KVYDQPFRNP (188 aa)) form an interaction with CTC1 region. A DNA-binding region (OB) is located at residues 64-165 (VDIMGAVISV…EICATIYYKV (102 aa)). Winged helix-turn-helix (wHTH) stretches follow at residues 201-304 (EALN…YVTS) and 305-408 (KDKD…YTAF).

The protein belongs to the STN1 family. In terms of assembly, component of the CST complex, composed of TEN1/C17orf106, CTC1/C17orf68 and STN1; in the complex interacts directly with TEN1 and CTC1. Interacts with ACD/TPP1, POT1 and POLA1.

The protein resides in the nucleus. It localises to the chromosome. Its subcellular location is the telomere. In terms of biological role, component of the CST complex proposed to act as a specialized replication factor promoting DNA replication under conditions of replication stress or natural replication barriers such as the telomere duplex. The CST complex binds single-stranded DNA with high affinity in a sequence-independent manner, while isolated subunits bind DNA with low affinity by themselves. Initially the CST complex has been proposed to protect telomeres from DNA degradation. However, the CST complex has been shown to be involved in several aspects of telomere replication. The CST complex inhibits telomerase and is involved in telomere length homeostasis; it is proposed to bind to newly telomerase-synthesized 3' overhangs and to terminate telomerase action implicating the association with the ACD:POT1 complex thus interfering with its telomerase stimulation activity. The CST complex is also proposed to be involved in fill-in synthesis of the telomeric C-strand probably implicating recruitment and activation of DNA polymerase alpha. The CST complex facilitates recovery from many forms of exogenous DNA damage; seems to be involved in the re-initiation of DNA replication at repaired forks and/or dormant origins. Required for efficicient replication of the duplex region of the telomere. Promotes efficient replication of lagging-strand telomeres. Promotes general replication start following replication-fork stalling implicating new origin firing. May be in involved in C-strand fill-in during late S/G2 phase independent of its role in telomere duplex replication. This Rattus norvegicus (Rat) protein is CST complex subunit STN1.